The primary structure comprises 601 residues: Elongation factor 4 (601 aa).

Residues 7 to 189 (KNIRNFSIVA…AIVTRLPPPM (183 aa)) enclose the tr-type G domain. GTP contacts are provided by residues 19-24 (DHGKST) and 136-139 (NKVD).

The protein belongs to the TRAFAC class translation factor GTPase superfamily. Classic translation factor GTPase family. LepA subfamily.

It is found in the cell inner membrane. It catalyses the reaction GTP + H2O = GDP + phosphate + H(+). In terms of biological role, required for accurate and efficient protein synthesis under certain stress conditions. May act as a fidelity factor of the translation reaction, by catalyzing a one-codon backward translocation of tRNAs on improperly translocated ribosomes. Back-translocation proceeds from a post-translocation (POST) complex to a pre-translocation (PRE) complex, thus giving elongation factor G a second chance to translocate the tRNAs correctly. Binds to ribosomes in a GTP-dependent manner. The protein is Elongation factor 4 of Xanthobacter autotrophicus (strain ATCC BAA-1158 / Py2).